Here is a 128-residue protein sequence, read N- to C-terminus: Large ribosomal subunit protein bL12 (128 aa).

It belongs to the bacterial ribosomal protein bL12 family. In terms of assembly, homodimer. Part of the ribosomal stalk of the 50S ribosomal subunit. Forms a multimeric L10(L12)X complex, where L10 forms an elongated spine to which 2 to 4 L12 dimers bind in a sequential fashion. Binds GTP-bound translation factors.

Its function is as follows. Forms part of the ribosomal stalk which helps the ribosome interact with GTP-bound translation factors. Is thus essential for accurate translation. The sequence is that of Large ribosomal subunit protein bL12 from Trichormus variabilis (strain ATCC 29413 / PCC 7937) (Anabaena variabilis).